A 118-amino-acid polypeptide reads, in one-letter code: Large ribosomal subunit protein bL17 (118 aa).

It belongs to the bacterial ribosomal protein bL17 family. As to quaternary structure, part of the 50S ribosomal subunit. Contacts protein L32.

The sequence is that of Large ribosomal subunit protein bL17 from Hydrogenobaculum sp. (strain Y04AAS1).